We begin with the raw amino-acid sequence, 597 residues long: Polyphenol oxidase latent form, chloroplastic (597 aa).

Residues 1–49 (MATAPSPTTMGTYSSLISTNSFSTFLPNKSQLSLSGKSKHYVARRSSIS) constitute a chloroplast transit peptide. Residues 49–70 (SCKATNNNNSNNQNEQQEESSR) are disordered. The transit peptide at 50–101 (CKATNNNNSNNQNEQQEESSRLLGKLDRRNILIGLGGLYGATTLDRKPFAFA) directs the protein to the thylakoid. Positions 54-63 (NNNNSNNQNE) are enriched in low complexity. 2 cysteine pairs are disulfide-bonded: Cys112–Cys128 and Cys127–Cys189. Cu cation-binding residues include His188, His209, His218, His341, His345, and His375. The 2'-(S-cysteinyl)-histidine (Cys-His) cross-link spans 192-209 (CNGAYPQVGFTDNDIQVH).

It belongs to the tyrosinase family. Monomer. Cu(2+) is required as a cofactor. In terms of tissue distribution, expressed in immature-green fruit.

The protein localises to the plastid. The protein resides in the chloroplast thylakoid lumen. It carries out the reaction 2 catechol + O2 = 2 1,2-benzoquinone + 2 H2O. Activated in the presence of substrate at low pH. Specific activity fluctuates during fruit ripening, starting at immature-green stage, reaching a peak at the breaker stage, followed by a sharp decrease until the half-ripe stage to remain stable during the following development stages. Triggered by CuSO(4) and by low concentrations of SDS. Repressed by several inhibitors including 4-hexylresorcinol, ascorbic acid, benzoic acid, kojic acid, glutathione (reduced form), L-cysteine and sodium metabisulfite. Inhibited by various salt such as FeSO(4), KCl, NaCl, CaCl(2), MnCl(2), NiCl(2) and AlCl(3). Spontaneously activated during storage at 4 degrees Celsius. Catalyzes the oxidation of mono- and o-diphenols to o-diquinones. Uses preferentially 4-methylcatechol and chlorogenic acid as substrates, followed by caffeic acid, pyrogallol, and catechol, but barely active toward dopamine and L-dopa. No activity detected with monophenols (e.g. phenol and tyramine). The polypeptide is Polyphenol oxidase latent form, chloroplastic (Prunus armeniaca (Apricot)).